The sequence spans 373 residues: MATQAHSLSYAGCNFLRQRLVLSTLSGRPVKIRRIRARDDNPGLRDFEASFIRLLDKITNGSRIEINQTGTTLYYQPGLLYGGSVEHDCSVLRGIGYYLEALLCLAPFMKHPLKIVLRGVTNDQVDPSVDVLKATALPLLKQFGIDGESFELKILRRGMPPGGGGEVLFSCPVRKVLKPVQLTDPGKIKRIRGMAYSVRVSPQMANRIVDSARSILNKFIPDIYIYTDHMKGVSSGKSPGFGLSLVAETTNGTFLSAELASNPQGQGAAVLPEDLGRNCAKLLLEEIYRGGCVDSTNQSLVLLLMTLGQQDVSKVLLGPLSPYTIEFLRHLKSFFQVMFKVETKPCGEELKGGDKVLMTCVGIGFSNLSKTLK.

Belongs to the RNA 3'-terminal cyclase family. Type 2 subfamily. In terms of assembly, part of the small subunit (SSU) processome, composed of more than 70 proteins and the RNA chaperone small nucleolar RNA (snoRNA) U3. Interacts with BMS1.

The protein localises to the nucleus. It localises to the nucleolus. Its function is as follows. As part of the small subunit (SSU) processome, it plays a role in 40S-ribosomal-subunit biogenesis in the early pre-rRNA processing steps at sites A0, A1 and A2 that are required for proper maturation of the 18S RNA. Activates BMS1 by promoting GDP/GTP exchange. Does not have cyclase activity. The sequence is that of RNA 3'-terminal phosphate cyclase-like protein (Rcl1) from Mus musculus (Mouse).